Reading from the N-terminus, the 233-residue chain is Biosynthetic peptidoglycan transglycosylase (233 aa).

Residues 17 to 37 (IVLAVLALVVLPYVLIFFYLL) traverse the membrane as a helical segment.

This sequence belongs to the glycosyltransferase 51 family.

Its subcellular location is the cell inner membrane. It catalyses the reaction [GlcNAc-(1-&gt;4)-Mur2Ac(oyl-L-Ala-gamma-D-Glu-L-Lys-D-Ala-D-Ala)](n)-di-trans,octa-cis-undecaprenyl diphosphate + beta-D-GlcNAc-(1-&gt;4)-Mur2Ac(oyl-L-Ala-gamma-D-Glu-L-Lys-D-Ala-D-Ala)-di-trans,octa-cis-undecaprenyl diphosphate = [GlcNAc-(1-&gt;4)-Mur2Ac(oyl-L-Ala-gamma-D-Glu-L-Lys-D-Ala-D-Ala)](n+1)-di-trans,octa-cis-undecaprenyl diphosphate + di-trans,octa-cis-undecaprenyl diphosphate + H(+). Its pathway is cell wall biogenesis; peptidoglycan biosynthesis. Peptidoglycan polymerase that catalyzes glycan chain elongation from lipid-linked precursors. In Rhizobium etli (strain ATCC 51251 / DSM 11541 / JCM 21823 / NBRC 15573 / CFN 42), this protein is Biosynthetic peptidoglycan transglycosylase.